Consider the following 772-residue polypeptide: MTHTRRKSLPMLSSGPTGRGEPLQMEDSNMEQGTEDVEPGMPESPGHLTGRRKNYPLRKRSLVPEKPKACKVLLTRLENVAGPRSADEADELPPDLPKPPSPTSSSEDAGLVQPRKRRLASLNAEALNNLLLEREETSSLAGARRSRGGDPHRSRDRATGSWSFSKKRPRLGDLGEGSRDLSPELAPDEGARRDGDPAPKRLASLNAAAFLKLSQERELPLRPSRAQAEADGRSTEPLAPRILRPKVNGKNCPKARQGAGSGEATGPPNWQEQPDERWPSAPPHGPPTQPSHQAPGKALENPLRPNLPLLMGGQAALKPEPGRPGEESPAPKQELHQPSFPAPQLSPLPMPGNPADYSGPCGGPELTALGSFYLYCGQDGLQCGAYSPCPMLPEGKLSPVAAPNEGLLMAPSSVPSGVPFQHPPWSAPRYCSSEDTGANGYSICGVLPLSLTHIGTTCGGCPYKMPFTAEGCRSLGQLEFPLPEAGHPASPAHPLLGCPVPSVPPAAEPIPHLQTPISEPQTVARACPQSAKPPSGSKSGLRTGSSCRHTVRSKAARRPSHPKQPRAQRPRPRRRRRRRTNGWVPVGAACEKAVYVLDEPEPAIRKSYQAVERHGETIRVRDTVLLKSGPRKTSTPYVAKISALWENPESGELMMSLLWYYRPEHLQGGRSPSMHEPLQNEVFASRHQDQNSVACIEEKCYVLTFAEYCRFCAMAKRRGEGLPSRKTALVPPSADYSTPPHRTVPEDTDPELVFLCRHVYDFRHGRILKNPQ.

2 disordered regions span residues 1-63 (MTHT…RSLV) and 77-117 (LENV…PRKR). At Ser-8 the chain carries Phosphoserine. The span at 49–61 (TGRRKNYPLRKRS) shows a compositional bias: basic residues. Ser-101 and Ser-121 each carry phosphoserine. 3 disordered regions span residues 131–357 (LLER…PADY), 521–582 (QTVA…RTNG), and 723–743 (PSRK…PHRT). 3 stretches are compositionally biased toward basic and acidic residues: residues 147–158 (RGGDPHRSRDRA), 170–182 (RLGD…RDLS), and 189–199 (EGARRDGDPAP). Ser-182 carries the post-translational modification Phosphoserine. Phosphoserine is present on Ser-204. The span at 280–289 (SAPPHGPPTQ) shows a compositional bias: pro residues. The segment covering 299–310 (LENPLRPNLPLL) has biased composition (low complexity). Residues 340–352 (FPAPQLSPLPMPG) show a composition bias toward pro residues. A compositionally biased stretch (polar residues) spans 536–548 (GSKSGLRTGSSCR). The segment covering 549-580 (HTVRSKAARRPSHPKQPRAQRPRPRRRRRRRT) has biased composition (basic residues). Thr-580 carries the phosphothreonine modification. Positions 616–771 (ETIRVRDTVL…FRHGRILKNP (156 aa)) constitute a BAH domain.

In terms of assembly, interacts with CBX5 (HP1 alpha), HDAC5, MBD1 and SP1. In terms of processing, ubiquitinated in a FBXO11-dependent manner; leading to degradation.

Its subcellular location is the nucleus. It is found in the chromosome. Functionally, heterochromatin protein that acts as a transcription repressor and has the ability to promote the formation of large heterochromatic domains. May act by recruiting heterochromatin proteins such as CBX5 (HP1 alpha), HDAC5 and MBD1. Represses IGF2 expression by binding to its CpG-rich P3 promoter and recruiting heterochromatin proteins. The polypeptide is Bromo adjacent homology domain-containing 1 protein (Bahd1) (Mus musculus (Mouse)).